A 209-amino-acid chain; its full sequence is CASP-like protein 1A1 (209 aa).

A disordered region spans residues 1 to 26 (MEEAKHNEAEEAQGIEAREAKQIEAG). The Cytoplasmic portion of the chain corresponds to 1–49 (MEEAKHNEAEEAQGIEAREAKQIEAGETSRSSRKLITFEPKLVINKGIS). Residues 50 to 70 (VLGFVLRLFAVFGTIGSALAM) traverse the membrane as a helical segment. Topologically, residues 71–95 (GTTHESVVSLSQLVLLKVKYSDLPT) are extracellular. Residues 96–116 (LMFFVVANAISGGYLVLSLPV) form a helical membrane-spanning segment. At 117-130 (SIFHIFSTQAKTSR) the chain is on the cytoplasmic side. The helical transmembrane segment at 131–151 (IILLVVDTVMLALVSSGASAA) threads the bilayer. At 152–183 (TATVYLAHEGNTTANWPPICQQFDGFCERISG) the chain is on the extracellular side. Asn-162 carries an N-linked (GlcNAc...) asparagine glycan. The helical transmembrane segment at 184 to 204 (SLIGSFCAVILLMLIVINSAI) threads the bilayer. Over 205–209 (SLSRH) the chain is Cytoplasmic.

Belongs to the Casparian strip membrane proteins (CASP) family. As to quaternary structure, homodimer and heterodimers. In terms of tissue distribution, expressed in the root endodermis.

The protein localises to the cell membrane. The polypeptide is CASP-like protein 1A1 (Arabidopsis thaliana (Mouse-ear cress)).